The chain runs to 497 residues: Cytochrome P450 76AD1 (497 aa).

A helical membrane pass occupies residues 4–24 (ATLAMILAIWFISFHFIKLLF). C439 is a binding site for heme.

This sequence belongs to the cytochrome P450 family. The cofactor is heme.

It is found in the membrane. It functions in the pathway pigment biosynthesis; betalain biosynthesis. In terms of biological role, converts L-DOPA to cyclo-DOPA in the betalain pathway. Provides the cyclo-DOPA moiety of all red betacyanins. The protein is Cytochrome P450 76AD1 of Beta vulgaris (Sugar beet).